A 427-amino-acid chain; its full sequence is UPF0229 protein KPN78578_11640 (427 aa).

The tract at residues Arg72–Gly109 is disordered. The span at Pro77–Arg90 shows a compositional bias: basic and acidic residues. The span at Gln92–Gln102 shows a compositional bias: gly residues.

This sequence belongs to the UPF0229 family.

The chain is UPF0229 protein KPN78578_11640 from Klebsiella pneumoniae subsp. pneumoniae (strain ATCC 700721 / MGH 78578).